The primary structure comprises 381 residues: NF-kappa-B inhibitor-like protein 1 (381 aa).

A disordered region spans residues 1–34 (MSNPSPQAPEEEASTSVCRPQSCSMASASRRHRR). Polar residues predominate over residues 14-27 (STSVCRPQSCSMAS). ANK repeat units follow at residues 64 to 93 (AGQPPPLHRACARHDAPALCLLLRLGADPA) and 97 to 134 (RHGDTALHAAARQGPDAYTDFFLPLLSRCPSAMGIKNK). Disordered regions lie at residues 132 to 167 (KNKDGETPGQILGWGPPWDSAEEEEDEEVSKEREWR) and 186 to 298 (EDDA…WRFG). Phosphoserine is present on S151. A compositionally biased stretch (acidic residues) spans 151–160 (SAEEEEDEEV). 2 stretches are compositionally biased toward basic and acidic residues: residues 205–218 (RLAREHAQKQRQQL) and 237–290 (RQHE…RGAE).

Interacts with CACTIN (via N-terminal domain); the interaction occurs in a pro-inflammatory-independent manner. In terms of tissue distribution, high expression found in heart muscle, liver, kidney and skin. Not detected in spleen, lung and brain.

It is found in the nucleus. Functionally, involved in the regulation of innate immune response. Acts as negative regulator of Toll-like receptor and interferon-regulatory factor (IRF) signaling pathways. Contributes to the negative regulation of transcriptional activation of NF-kappa-B target genes in response to endogenous pro-inflammatory stimuli. This Mus musculus (Mouse) protein is NF-kappa-B inhibitor-like protein 1 (Nfkbil1).